Reading from the N-terminus, the 28-residue chain is Potassium channel toxin kappa-KTx 2.9 (28 aa).

2 cysteine pairs are disulfide-bonded: Cys-4/Cys-22 and Cys-8/Cys-18.

Belongs to the short scorpion toxin superfamily. Potassium channel inhibitor family. Gamma-KTx 2 subfamily. Post-translationally, contains 2 disulfide bonds. Expressed by the venom gland.

It is found in the secreted. Reversibly blocks voltage-gated potassium channels Kv1.2/KCNA2 and Kv1.3/KCNA3. The sequence is that of Potassium channel toxin kappa-KTx 2.9 from Pandinus imperator (Emperor scorpion).